The primary structure comprises 378 residues: Dihydroorotate dehydrogenase (quinone) (378 aa).

Residues 79-83 and T103 each bind FMN; that span reads PGYDK. K83 is a binding site for substrate. 128–132 serves as a coordination point for substrate; it reads NRMGF. FMN contacts are provided by N160 and N193. N193 is a substrate binding site. S196 serves as the catalytic Nucleophile. N198 serves as a coordination point for substrate. 2 residues coordinate FMN: K231 and T259. Residue 260–261 coordinates substrate; sequence NT. FMN is bound by residues G289, G318, and 339-340; that span reads YT.

This sequence belongs to the dihydroorotate dehydrogenase family. Type 2 subfamily. Monomer. It depends on FMN as a cofactor.

It is found in the cell membrane. The catalysed reaction is (S)-dihydroorotate + a quinone = orotate + a quinol. It participates in pyrimidine metabolism; UMP biosynthesis via de novo pathway; orotate from (S)-dihydroorotate (quinone route): step 1/1. In terms of biological role, catalyzes the conversion of dihydroorotate to orotate with quinone as electron acceptor. This is Dihydroorotate dehydrogenase (quinone) from Trichodesmium erythraeum (strain IMS101).